We begin with the raw amino-acid sequence, 254 residues long: Pyruvate dehydrogenase complex repressor (254 aa).

Residues 9-77 form the HTH gntR-type domain; it reads PKLSDVIEQQ…QGGGTFVQSS (69 aa). The segment at residues 37–56 is a DNA-binding region (H-T-H motif); sequence ERELAKQFDVSRPSLREAIQ.

Transcriptional repressor for the pyruvate dehydrogenase complex genes aceEF and lpd. The polypeptide is Pyruvate dehydrogenase complex repressor (pdhR) (Salmonella typhi).